The sequence spans 285 residues: Putative ABC transporter ATP-binding protein CPE0195 (285 aa).

The 237-residue stretch at 6 to 242 folds into the ABC transporter domain; the sequence is LKVEELNYNY…KEVIRKVNLR (237 aa). Residue 39–46 coordinates ATP; sequence GGNGVGKS.

The protein belongs to the ABC transporter superfamily.

Its subcellular location is the cell membrane. In terms of biological role, probably part of an ABC transporter complex. Responsible for energy coupling to the transport system. The sequence is that of Putative ABC transporter ATP-binding protein CPE0195 from Clostridium perfringens (strain 13 / Type A).